The sequence spans 131 residues: MSWQAYVDDHLMCDVGDGNTLASAAIIGHDGSVWAQSANFPQLKPEEVTGIMNDFNEGGFLAPTGLFLGGTKYMVIQGESGAVIGKKGSGGATLKKTGQAIVIGIYDEPMTPGQCNLVVERLGDYLLEQGM.

Belongs to the profilin family. In terms of assembly, occurs in many kinds of cells as a complex with monomeric actin in a 1:1 ratio.

The protein resides in the cytoplasm. Its subcellular location is the cytoskeleton. Binds to actin and affects the structure of the cytoskeleton. At high concentrations, profilin prevents the polymerization of actin, whereas it enhances it at low concentrations. By binding to PIP2, it inhibits the formation of IP3 and DG. This Parietaria judaica (Pellitory-of-the-wall) protein is Profilin-2 (PRO2).